Here is a 416-residue protein sequence, read N- to C-terminus: MRYSALSILLNGLRGNRNWAPAWRQPDPKPHYDVIIVGGGGHGLATAYYLAKEFGITNVAVLEKNYIGSGNVGRNTTIIRSNYLLPGNNPFYELSMKLWEGLEQDFNFNAMVSQRGVLNLFHSDAQRDAYTRRGNAMRLHGVDAELLYRAAVRKMLPFLDFDNARFPIQGGLLQRRGGTVRHDAVAWGYARGADSRGVDIIQNCEVTGIRRENGRVIGVETSRGFIGCAKLALAAAGNSSQVAEMAGLRLPIESHVLQAFVSEGLKPFIDGVVTFGAGHFYVSQSDKGGLVFGGDIDGYNSYAQRGNLATVEHVAEAGKAMIPALSRVRVLRSWGGIMDMSMDGSPIIDRTPIDNLYLNAGWCYGGFKATPASGFCFAHLLARGAPQKTAAAFRLDRFERGFLIDEKGQGAQPNLH.

FAD is bound by residues glycine 41, histidine 42, glutamate 63, asparagine 71, threonine 76, and isoleucine 78. A Tele-8alpha-FMN histidine modification is found at histidine 182. FAD-binding residues include valine 206, glycine 366, and lysine 368.

It belongs to the SoxB family. In terms of assembly, heterotetramer composed of subunits alpha (SoxA), beta (SoxB), gamma (SoxG) and delta (SoxD). The cofactor is FAD. FMN serves as cofactor.

The protein resides in the cytoplasm. The enzyme catalyses sarcosine + (6S)-5,6,7,8-tetrahydrofolate + O2 = (6R)-5,10-methylene-5,6,7,8-tetrahydrofolate + glycine + H2O2. The catalysed reaction is sarcosine + O2 + H2O = formaldehyde + glycine + H2O2. In the presence of tetrahydrofolate, catalyzes the oxidative demethylation of sarcosine to yield glycine, 5,10-methylenetetrahydrofolate and hydrogen peroxide. In the absence of tetrahydrofolate, catalyzes the oxidative demethylation of sarcosine to yield glycine, formaldehyde and hydrogen peroxide. The chain is Sarcosine oxidase subunit beta (soxB) from Rhizobium meliloti (strain 1021) (Ensifer meliloti).